A 250-amino-acid chain; its full sequence is MSPDHGELLYEGKAKRIYATDHPDQVLVEYKNDATAFNAQKKAQLADKGRLNCQISARLFELLEGQGVPSHYLGLAGDTWMLVQRVEVIPLEVVLRNIATGSLCRQTPIAEGTPINPALLDLYYKDDDLGDPLLTEARVRLLGLVDDARQSAIEQLARRINGVLQPFFDGLELQLVDFKLELGLNKAGELLLADEISPDTCRFWDQRSSDTNDRILDKDRFRKDLGGVMEAYGEVLKRVHTACPNPRNCL.

It belongs to the SAICAR synthetase family.

It catalyses the reaction 5-amino-1-(5-phospho-D-ribosyl)imidazole-4-carboxylate + L-aspartate + ATP = (2S)-2-[5-amino-1-(5-phospho-beta-D-ribosyl)imidazole-4-carboxamido]succinate + ADP + phosphate + 2 H(+). It participates in purine metabolism; IMP biosynthesis via de novo pathway; 5-amino-1-(5-phospho-D-ribosyl)imidazole-4-carboxamide from 5-amino-1-(5-phospho-D-ribosyl)imidazole-4-carboxylate: step 1/2. This is Phosphoribosylaminoimidazole-succinocarboxamide synthase from Parasynechococcus marenigrum (strain WH8102).